A 346-amino-acid polypeptide reads, in one-letter code: Ribosomal RNA small subunit methyltransferase H (346 aa).

Residues 46–48 (GGY), D63, F90, D113, and Q120 contribute to the S-adenosyl-L-methionine site. The disordered stretch occupies residues 270–327 (GGSAGSRHMPETHMRLPSFTPAVKGAVGPTPEEEERNPRARSAKLRAGIRTENSPLED).

It belongs to the methyltransferase superfamily. RsmH family.

The protein resides in the cytoplasm. The enzyme catalyses cytidine(1402) in 16S rRNA + S-adenosyl-L-methionine = N(4)-methylcytidine(1402) in 16S rRNA + S-adenosyl-L-homocysteine + H(+). Its function is as follows. Specifically methylates the N4 position of cytidine in position 1402 (C1402) of 16S rRNA. The chain is Ribosomal RNA small subunit methyltransferase H from Brucella ovis (strain ATCC 25840 / 63/290 / NCTC 10512).